Here is a 149-residue protein sequence, read N- to C-terminus: Large ribosomal subunit protein uL15 (149 aa).

The disordered stretch occupies residues 1–58 (MKLHNLRPAKGGEVKARKRVGRGYGSGLGHNAGRGRDGQNSRSGGGVRPGFEGGQMPL). 2 stretches are compositionally biased toward gly residues: residues 22–32 (RGYGSGLGHNA) and 43–53 (SGGGVRPGFEG).

The protein belongs to the universal ribosomal protein uL15 family. As to quaternary structure, part of the 50S ribosomal subunit.

In terms of biological role, binds to the 23S rRNA. The chain is Large ribosomal subunit protein uL15 from Finegoldia magna (strain ATCC 29328 / DSM 20472 / WAL 2508) (Peptostreptococcus magnus).